The following is a 139-amino-acid chain: Large ribosomal subunit protein bL20 (139 aa).

This sequence belongs to the bacterial ribosomal protein bL20 family.

Functionally, binds directly to 23S ribosomal RNA and is necessary for the in vitro assembly process of the 50S ribosomal subunit. It is not involved in the protein synthesizing functions of that subunit. This Leuconostoc mesenteroides subsp. mesenteroides (strain ATCC 8293 / DSM 20343 / BCRC 11652 / CCM 1803 / JCM 6124 / NCDO 523 / NBRC 100496 / NCIMB 8023 / NCTC 12954 / NRRL B-1118 / 37Y) protein is Large ribosomal subunit protein bL20.